The sequence spans 393 residues: Pyridinium-3,5-bisthiocarboxylic acid mononucleotide nickel insertion protein (393 aa).

The protein belongs to the LarC family.

The catalysed reaction is Ni(II)-pyridinium-3,5-bisthiocarboxylate mononucleotide = pyridinium-3,5-bisthiocarboxylate mononucleotide + Ni(2+). Functionally, involved in the biosynthesis of a nickel-pincer cofactor ((SCS)Ni(II) pincer complex). Binds Ni(2+), and functions in nickel delivery to pyridinium-3,5-bisthiocarboxylic acid mononucleotide (P2TMN), to form the mature cofactor. Is thus probably required for the activation of nickel-pincer cofactor-dependent enzymes. This chain is Pyridinium-3,5-bisthiocarboxylic acid mononucleotide nickel insertion protein, found in Nocardioides sp. (strain ATCC BAA-499 / JS614).